The sequence spans 724 residues: Catalase-peroxidase (724 aa).

A disordered region spans residues 1–26 (MDENKTKPTGKCPVMHGGNTSTGSSN). The segment at residues 98-225 (WHSAGSYRTT…LAAVQMGLIY (128 aa)) is a cross-link (tryptophyl-tyrosyl-methioninium (Trp-Tyr) (with M-251)). Residue His-99 is the Proton acceptor of the active site. Positions 225–251 (YVNPEGVDGKSDPLRTAQDMRVTFSRM) form a cross-link, tryptophyl-tyrosyl-methioninium (Tyr-Met) (with W-98). Heme b is bound at residue His-266.

This sequence belongs to the peroxidase family. Peroxidase/catalase subfamily. In terms of assembly, homodimer or homotetramer. It depends on heme b as a cofactor. Formation of the three residue Trp-Tyr-Met cross-link is important for the catalase, but not the peroxidase activity of the enzyme.

It catalyses the reaction H2O2 + AH2 = A + 2 H2O. The catalysed reaction is 2 H2O2 = O2 + 2 H2O. Bifunctional enzyme with both catalase and broad-spectrum peroxidase activity. This Pectobacterium atrosepticum (strain SCRI 1043 / ATCC BAA-672) (Erwinia carotovora subsp. atroseptica) protein is Catalase-peroxidase.